A 96-amino-acid chain; its full sequence is Co-chaperonin GroES (96 aa).

It belongs to the GroES chaperonin family. Heptamer of 7 subunits arranged in a ring. Interacts with the chaperonin GroEL.

Its subcellular location is the cytoplasm. Together with the chaperonin GroEL, plays an essential role in assisting protein folding. The GroEL-GroES system forms a nano-cage that allows encapsulation of the non-native substrate proteins and provides a physical environment optimized to promote and accelerate protein folding. GroES binds to the apical surface of the GroEL ring, thereby capping the opening of the GroEL channel. This chain is Co-chaperonin GroES, found in Caulobacter sp. (strain K31).